A 396-amino-acid polypeptide reads, in one-letter code: Probable intron-encoded endonuclease aI3 (396 aa).

The tract at residues Thr-51–Thr-90 is disordered. Residues Asn-74–Thr-90 show a composition bias toward low complexity.

This sequence belongs to the LAGLIDADG endonuclease family.

Its subcellular location is the mitochondrion. Mitochondrial DNA endonuclease involved in intron homing. The protein is Probable intron-encoded endonuclease aI3 (aI3) of Kluyveromyces lactis (strain ATCC 8585 / CBS 2359 / DSM 70799 / NBRC 1267 / NRRL Y-1140 / WM37) (Yeast).